The primary structure comprises 178 residues: Ribonuclease M5 (178 aa).

The Toprim domain occupies 10-94 (DGVIVCEGKT…YVDMNARLKN (85 aa)). 3 residues coordinate Mg(2+): glutamate 16, aspartate 62, and aspartate 64.

The protein belongs to the ribonuclease M5 family. It depends on Mg(2+) as a cofactor.

Its subcellular location is the cytoplasm. It carries out the reaction Endonucleolytic cleavage of RNA, removing 21 and 42 nucleotides, respectively, from the 5'- and 3'-termini of a 5S-rRNA precursor.. Required for correct processing of both the 5' and 3' ends of 5S rRNA precursor. Cleaves both sides of a double-stranded region yielding mature 5S rRNA in one step. This is Ribonuclease M5 (rnmV) from Mycoplasma genitalium (strain ATCC 33530 / DSM 19775 / NCTC 10195 / G37) (Mycoplasmoides genitalium).